The sequence spans 598 residues: Elongation factor 4 (598 aa).

A tr-type G domain is found at 4 to 186 (SRLRNFSIIA…EIVKKIPPPK (183 aa)). Residues 16-21 (DHGKST) and 133-136 (NKID) each bind GTP.

This sequence belongs to the TRAFAC class translation factor GTPase superfamily. Classic translation factor GTPase family. LepA subfamily.

The protein resides in the cell inner membrane. The enzyme catalyses GTP + H2O = GDP + phosphate + H(+). Required for accurate and efficient protein synthesis under certain stress conditions. May act as a fidelity factor of the translation reaction, by catalyzing a one-codon backward translocation of tRNAs on improperly translocated ribosomes. Back-translocation proceeds from a post-translocation (POST) complex to a pre-translocation (PRE) complex, thus giving elongation factor G a second chance to translocate the tRNAs correctly. Binds to ribosomes in a GTP-dependent manner. This chain is Elongation factor 4, found in Pelobacter propionicus (strain DSM 2379 / NBRC 103807 / OttBd1).